We begin with the raw amino-acid sequence, 254 residues long: Cytochrome c oxidase subunit 2 (254 aa).

Topologically, residues 1–37 (MNNILNFYPAVITTDVAENWQIGFQDPATPIMEGIIN) are mitochondrial intermembrane. Residues 38–58 (LHYDLMFFICVISVFVSWMLG) form a helical membrane-spanning segment. Over 59–83 (RTLWHFEQNQNKIPSSLTHGTLIEM) the chain is Mitochondrial matrix. A helical transmembrane segment spans residues 84-104 (IWTVTPAFILLIIAVPSFSLL). The Mitochondrial intermembrane portion of the chain corresponds to 105 to 254 (YAMDEIISPA…VSWISNKLNE (150 aa)). Cu cation is bound by residues H186, C221, E223, C225, H229, and M232. Mg(2+) is bound at residue E223.

It belongs to the cytochrome c oxidase subunit 2 family. As to quaternary structure, component of the cytochrome c oxidase (complex IV, CIV), a multisubunit enzyme composed of a catalytic core of 3 subunits and several supernumerary subunits. The complex exists as a monomer or a dimer and forms supercomplexes (SCs) in the inner mitochondrial membrane with ubiquinol-cytochrome c oxidoreductase (cytochrome b-c1 complex, complex III, CIII). The cofactor is Cu cation.

The protein localises to the mitochondrion inner membrane. The enzyme catalyses 4 Fe(II)-[cytochrome c] + O2 + 8 H(+)(in) = 4 Fe(III)-[cytochrome c] + 2 H2O + 4 H(+)(out). Component of the cytochrome c oxidase, the last enzyme in the mitochondrial electron transport chain which drives oxidative phosphorylation. The respiratory chain contains 3 multisubunit complexes succinate dehydrogenase (complex II, CII), ubiquinol-cytochrome c oxidoreductase (cytochrome b-c1 complex, complex III, CIII) and cytochrome c oxidase (complex IV, CIV), that cooperate to transfer electrons derived from NADH and succinate to molecular oxygen, creating an electrochemical gradient over the inner membrane that drives transmembrane transport and the ATP synthase. Cytochrome c oxidase is the component of the respiratory chain that catalyzes the reduction of oxygen to water. Electrons originating from reduced cytochrome c in the intermembrane space (IMS) are transferred via the dinuclear copper A center (CU(A)) of subunit 2 and heme A of subunit 1 to the active site in subunit 1, a binuclear center (BNC) formed by heme A3 and copper B (CU(B)). The BNC reduces molecular oxygen to 2 water molecules using 4 electrons from cytochrome c in the IMS and 4 protons from the mitochondrial matrix. This Chondrus crispus (Carrageen Irish moss) protein is Cytochrome c oxidase subunit 2 (COX2).